The primary structure comprises 291 residues: N-acetylmannosamine kinase (291 aa).

ATP-binding positions include 5–12 (AIDIGGTK) and 132–139 (GVGGGVVS). Zn(2+) contacts are provided by H156, C166, C168, and C173.

The protein belongs to the ROK (NagC/XylR) family. NanK subfamily. Homodimer.

The catalysed reaction is an N-acyl-D-mannosamine + ATP = an N-acyl-D-mannosamine 6-phosphate + ADP + H(+). It participates in amino-sugar metabolism; N-acetylneuraminate degradation; D-fructose 6-phosphate from N-acetylneuraminate: step 2/5. Catalyzes the phosphorylation of N-acetylmannosamine (ManNAc) to ManNAc-6-P. In Escherichia coli (strain SE11), this protein is N-acetylmannosamine kinase.